We begin with the raw amino-acid sequence, 522 residues long: Response regulator mcs4 (522 aa).

The interval 148 to 274 (DSLESPVSAP…RSISHSSLYT (127 aa)) is disordered. The span at 174–194 (NLRNASRTRSHQTLPSSNVNK) shows a compositional bias: polar residues. Residues 244 to 255 (RSDESTAEKLAK) show a composition bias toward basic and acidic residues. Polar residues predominate over residues 260–274 (TPTNSRSISHSSLYT). Positions 363 to 505 (NVLIVEDNII…WLEKKITEWG (143 aa)) constitute a Response regulatory domain. Asp412 is subject to 4-aspartylphosphate.

Its subcellular location is the cytoplasm. Functionally, response regulator that coordinately controls the stress activated wak1-wis1-sty1 MAP kinase pathway and fission yeast cell cycle. The chain is Response regulator mcs4 (mcs4) from Schizosaccharomyces pombe (strain 972 / ATCC 24843) (Fission yeast).